Reading from the N-terminus, the 248-residue chain is DNA repair protein RecO (248 aa).

The protein belongs to the RecO family.

Involved in DNA repair and RecF pathway recombination. The chain is DNA repair protein RecO from Bacillus cereus (strain B4264).